The sequence spans 416 residues: S-adenosylmethionine synthase (416 aa).

ATP is bound at residue histidine 16. Mg(2+) is bound at residue aspartate 18. Glutamate 44 is a binding site for K(+). 2 residues coordinate L-methionine: glutamate 57 and glutamine 100. The interval 100 to 110 is flexible loop; that stretch reads QSPDISQGVTA. Residues 175-177, 251-252, aspartate 260, 266-267, alanine 283, and lysine 287 each bind ATP; these read DGK, KF, and RK. Aspartate 260 contacts L-methionine. Lysine 291 is a binding site for L-methionine.

The protein belongs to the AdoMet synthase family. As to quaternary structure, homotetramer; dimer of dimers. It depends on Mg(2+) as a cofactor. Requires K(+) as cofactor.

It is found in the cytoplasm. It carries out the reaction L-methionine + ATP + H2O = S-adenosyl-L-methionine + phosphate + diphosphate. Its pathway is amino-acid biosynthesis; S-adenosyl-L-methionine biosynthesis; S-adenosyl-L-methionine from L-methionine: step 1/1. In terms of biological role, catalyzes the formation of S-adenosylmethionine (AdoMet) from methionine and ATP. The overall synthetic reaction is composed of two sequential steps, AdoMet formation and the subsequent tripolyphosphate hydrolysis which occurs prior to release of AdoMet from the enzyme. The protein is S-adenosylmethionine synthase of Microcystis aeruginosa (strain NIES-843 / IAM M-2473).